Consider the following 258-residue polypeptide: Protein OS-9 homolog (258 aa).

The first 18 residues, 1 to 18 (MNWTSLVYLWFIFKSIFA), serve as a signal peptide directing secretion. Residues Asn2, Asn51, and Asn70 are each glycosylated (N-linked (GlcNAc...) asparagine). The region spanning 114–237 (TSCVFSFNLH…HINVPKLCSL (124 aa)) is the MRH domain. Cysteines 116 and 132 form a disulfide. 2 residues coordinate a mannooligosaccharide derivative: Trp127 and Gln139. Residue Asn165 is glycosylated (N-linked (GlcNAc...) asparagine). Cystine bridges form between Cys193-Cys223 and Cys208-Cys235. Asp194, Arg200, Glu219, and Tyr225 together coordinate a mannooligosaccharide derivative.

Belongs to the OS-9 family. In terms of assembly, interacts with missfolded ER lumenal proteins.

The protein localises to the endoplasmic reticulum membrane. Functionally, lectin involved in the quality control of the secretory pathway. As a member of the endoplasmic reticulum-associated degradation lumenal (ERAD-L) surveillance system, targets misfolded endoplasmic reticulum lumenal glycoproteins for degradation. The polypeptide is Protein OS-9 homolog (YOS9) (Candida albicans (strain SC5314 / ATCC MYA-2876) (Yeast)).